The sequence spans 283 residues: Pantothenate synthetase (283 aa).

31 to 38 (MGALHDGH) contacts ATP. Residue histidine 38 is the Proton donor of the active site. Residue glutamine 62 coordinates (R)-pantoate. Glutamine 62 provides a ligand contact to beta-alanine. 148 to 151 (GKKD) lines the ATP pocket. Glutamine 154 is a (R)-pantoate binding site. Residues valine 177 and 185 to 188 (KSSR) each bind ATP.

It belongs to the pantothenate synthetase family. In terms of assembly, homodimer.

It is found in the cytoplasm. The catalysed reaction is (R)-pantoate + beta-alanine + ATP = (R)-pantothenate + AMP + diphosphate + H(+). Its pathway is cofactor biosynthesis; (R)-pantothenate biosynthesis; (R)-pantothenate from (R)-pantoate and beta-alanine: step 1/1. Catalyzes the condensation of pantoate with beta-alanine in an ATP-dependent reaction via a pantoyl-adenylate intermediate. The sequence is that of Pantothenate synthetase from Staphylococcus aureus (strain USA300).